We begin with the raw amino-acid sequence, 157 residues long: MKCPKCNSTHSRVVDSRHADEANAIRRRRECENCGTRFTTFEHIEMSPLIVVKKDGTREQFLREKILNGLVRSCEKRPVGYQQLEDITNKVEWRLRDEGQAEVSSREIGKHVMNLLMHVDQVSYVRFASVYKEFKDVDQLLESMQGILQEKNKRSDN.

A zinc finger lies at 3-34 (CPKCNSTHSRVVDSRHADEANAIRRRRECENC). The 91-residue stretch at 49–139 (LIVVKKDGTR…VYKEFKDVDQ (91 aa)) folds into the ATP-cone domain.

The protein belongs to the NrdR family. The cofactor is Zn(2+).

Functionally, negatively regulates transcription of bacterial ribonucleotide reductase nrd genes and operons by binding to NrdR-boxes. The chain is Transcriptional repressor NrdR from Staphylococcus carnosus (strain TM300).